Reading from the N-terminus, the 902-residue chain is Protein translocase subunit SecA (902 aa).

ATP is bound by residues Gln87, 105–109, and Asp512; that span reads GEGKT. Residues 836 to 902 are disordered; sequence DVEKVEEQHR…KFKQCCGKLK (67 aa). Basic and acidic residues predominate over residues 840-863; it reads VEEQHRKSENAPREYQHEEVEHVG. Zn(2+) is bound by residues Cys886, Cys888, Cys897, and Cys898.

The protein belongs to the SecA family. Monomer and homodimer. Part of the essential Sec protein translocation apparatus which comprises SecA, SecYEG and auxiliary proteins SecDF-YajC and YidC. The cofactor is Zn(2+).

It localises to the cell inner membrane. The protein resides in the cytoplasm. The enzyme catalyses ATP + H2O + cellular proteinSide 1 = ADP + phosphate + cellular proteinSide 2.. In terms of biological role, part of the Sec protein translocase complex. Interacts with the SecYEG preprotein conducting channel. Has a central role in coupling the hydrolysis of ATP to the transfer of proteins into and across the cell membrane, serving both as a receptor for the preprotein-SecB complex and as an ATP-driven molecular motor driving the stepwise translocation of polypeptide chains across the membrane. The polypeptide is Protein translocase subunit SecA (Pseudoalteromonas translucida (strain TAC 125)).